A 236-amino-acid chain; its full sequence is Small ribosomal subunit protein uS3 (236 aa).

Residues 39 to 107 enclose the KH type-2 domain; it reads IREFLTEELK…DTSLNIVEVR (69 aa). The segment at 214–236 is disordered; that stretch reads ASERRAVEGDNQGSSSNRRRENA.

The protein belongs to the universal ribosomal protein uS3 family. In terms of assembly, part of the 30S ribosomal subunit. Forms a tight complex with proteins S10 and S14.

In terms of biological role, binds the lower part of the 30S subunit head. Binds mRNA in the 70S ribosome, positioning it for translation. This is Small ribosomal subunit protein uS3 from Brucella abortus (strain S19).